We begin with the raw amino-acid sequence, 160 residues long: Oligoribonuclease (160 aa).

Residues 8–158 (LIWIDLEMTG…YNKLKKKTLI (151 aa)) form the Exonuclease domain. The active site involves Tyr-129.

Belongs to the oligoribonuclease family.

Its subcellular location is the cytoplasm. In terms of biological role, 3'-to-5' exoribonuclease specific for small oligoribonucleotides. This is Oligoribonuclease (orn) from Buchnera aphidicola subsp. Baizongia pistaciae (strain Bp).